The primary structure comprises 105 residues: Small ribosomal subunit protein uS10 (105 aa).

Belongs to the universal ribosomal protein uS10 family. In terms of assembly, part of the 30S ribosomal subunit.

In terms of biological role, involved in the binding of tRNA to the ribosomes. In Nitratidesulfovibrio vulgaris (strain DSM 19637 / Miyazaki F) (Desulfovibrio vulgaris), this protein is Small ribosomal subunit protein uS10.